The following is a 369-amino-acid chain: Peptide chain release factor subunit 1 (369 aa).

Belongs to the eukaryotic release factor 1 family. Heterodimer of two subunits, one of which binds GTP.

It is found in the cytoplasm. Its function is as follows. Directs the termination of nascent peptide synthesis (translation) in response to the termination codons UAA, UAG and UGA. In Saccharolobus solfataricus (strain ATCC 35092 / DSM 1617 / JCM 11322 / P2) (Sulfolobus solfataricus), this protein is Peptide chain release factor subunit 1 (prf1).